The chain runs to 613 residues: Portal protein (613 aa).

Residues 577–613 (ATGGDHGIRQAPSARGDAEPDHAKSKPARDPPPGAGS) are disordered. Over residues 592 to 605 (GDAEPDHAKSKPAR) the composition is skewed to basic and acidic residues.

This sequence belongs to the herpesviridae portal protein family. Homododecamerizes. Interacts with terminase subunits TRM1 and TRM3.

It localises to the virion. The protein localises to the host nucleus. Forms a portal in the viral capsid through which viral DNA is translocated during DNA packaging. Assembles as a dodecamer at a single fivefold axe of the T=16 icosahedric capsid. Binds to the molecular motor that translocates the viral DNA, termed terminase. In Homo sapiens (Human), this protein is Portal protein.